The following is a 259-amino-acid chain: Protein BEAN1 (259 aa).

A helical membrane pass occupies residues 36-56 (VLVASAVIGVVIILSCITIIV). A compositionally biased stretch (basic residues) spans 71-89 (RHRHHRHHHHHHHHRRRRH). Disordered stretches follow at residues 71–91 (RHRHHRHHHHHHHHRRRRHRE) and 152–259 (VGPG…ERIV). A compositionally biased stretch (polar residues) spans 171 to 187 (LTDSCPTLDGTSDSGSG). The segment covering 221–230 (GAGPPSGLLP) has biased composition (low complexity).

In terms of assembly, interacts with NEDD4.

The protein localises to the membrane. This chain is Protein BEAN1 (BEAN1), found in Homo sapiens (Human).